A 267-amino-acid chain; its full sequence is Protein HesA, heterocyst (267 aa).

This sequence belongs to the HesA/MoeB/ThiF family.

This Trichormus variabilis (strain ATCC 29413 / PCC 7937) (Anabaena variabilis) protein is Protein HesA, heterocyst (hesA1).